We begin with the raw amino-acid sequence, 59 residues long: Large ribosomal subunit protein bL32 (59 aa).

Belongs to the bacterial ribosomal protein bL32 family.

The sequence is that of Large ribosomal subunit protein bL32 from Desulfitobacterium hafniense (strain Y51).